Consider the following 372-residue polypeptide: Histidinol-phosphate aminotransferase (372 aa).

Lysine 234 bears the N6-(pyridoxal phosphate)lysine mark.

It belongs to the class-II pyridoxal-phosphate-dependent aminotransferase family. Histidinol-phosphate aminotransferase subfamily. As to quaternary structure, homodimer. The cofactor is pyridoxal 5'-phosphate.

It carries out the reaction L-histidinol phosphate + 2-oxoglutarate = 3-(imidazol-4-yl)-2-oxopropyl phosphate + L-glutamate. The protein operates within amino-acid biosynthesis; L-histidine biosynthesis; L-histidine from 5-phospho-alpha-D-ribose 1-diphosphate: step 7/9. The sequence is that of Histidinol-phosphate aminotransferase (hisC) from Corynebacterium efficiens (strain DSM 44549 / YS-314 / AJ 12310 / JCM 11189 / NBRC 100395).